Here is a 338-residue protein sequence, read N- to C-terminus: Nucleoid-associated protein PA14_59050 (338 aa).

It belongs to the YejK family.

Its subcellular location is the cytoplasm. It localises to the nucleoid. This Pseudomonas aeruginosa (strain UCBPP-PA14) protein is Nucleoid-associated protein PA14_59050.